The following is a 579-amino-acid chain: Altered inheritance of mitochondria protein 9, mitochondrial (579 aa).

A mitochondrion-targeting transit peptide spans 1–36 (MQSWNSQSFLSSHFTMLRYACKRAVPRLNAASGLRF).

This sequence belongs to the AIM9 family.

The protein resides in the mitochondrion. The protein is Altered inheritance of mitochondria protein 9, mitochondrial (AIM9) of Yarrowia lipolytica (strain CLIB 122 / E 150) (Yeast).